Here is a 473-residue protein sequence, read N- to C-terminus: Probable dipeptidase (473 aa).

Residue C10 is part of the active site.

Belongs to the peptidase C69 family.

It catalyses the reaction an L-aminoacyl-L-amino acid + H2O = 2 an L-alpha-amino acid. This chain is Probable dipeptidase, found in Latilactobacillus sakei (Lactobacillus sakei).